The chain runs to 475 residues: ATP synthase subunit beta 1 (475 aa).

ATP is bound at residue 152-159 (GGAGVGKT).

It belongs to the ATPase alpha/beta chains family. In terms of assembly, F-type ATPases have 2 components, CF(1) - the catalytic core - and CF(0) - the membrane proton channel. CF(1) has five subunits: alpha(3), beta(3), gamma(1), delta(1), epsilon(1). CF(0) has four main subunits: a(1), b(1), b'(1) and c(9-12).

It localises to the cell inner membrane. It carries out the reaction ATP + H2O + 4 H(+)(in) = ADP + phosphate + 5 H(+)(out). Functionally, produces ATP from ADP in the presence of a proton gradient across the membrane. The catalytic sites are hosted primarily by the beta subunits. The polypeptide is ATP synthase subunit beta 1 (Cereibacter sphaeroides (strain ATCC 17029 / ATH 2.4.9) (Rhodobacter sphaeroides)).